The sequence spans 364 residues: Beta-parvin (364 aa).

A disordered region spans residues 1–57; sequence MSSAPRSPTPRPRRMKKDESFLGKLGGTLARKRRAREVSDLQEEGKNAINSPMSPAL. A Phosphoserine modification is found at S7. The span at 36 to 46 shows a compositional bias: basic and acidic residues; sequence REVSDLQEEGK. S54 carries the phosphoserine modification. Calponin-homology (CH) domains follow at residues 87 to 194 and 254 to 361; these read KELV…MHFR and SVVK…TKYK.

The protein belongs to the parvin family. As to quaternary structure, interacts with DYSF. Interacts with ILK, ARHGEF6, PXN (via LD motifs), ACTN2 and actin. As to expression, expressed predominantly in heart and skeletal muscle.

Its subcellular location is the cell junction. It localises to the focal adhesion. It is found in the cell membrane. The protein resides in the cytoplasm. The protein localises to the cytoskeleton. Its subcellular location is the cell projection. It localises to the lamellipodium. It is found in the myofibril. The protein resides in the sarcomere. The protein localises to the z line. Its function is as follows. Adapter protein that plays a role in integrin signaling via ILK and in activation of the GTPases CDC42 and RAC1 by guanine exchange factors, such as ARHGEF6. Is involved in the reorganization of the actin cytoskeleton and formation of lamellipodia. Plays a role in cell adhesion, cell spreading, establishment or maintenance of cell polarity, and cell migration. This is Beta-parvin (PARVB) from Homo sapiens (Human).